A 345-amino-acid polypeptide reads, in one-letter code: Phosphoribosylformylglycinamidine cyclo-ligase (345 aa).

The protein belongs to the AIR synthase family.

The protein resides in the cytoplasm. It carries out the reaction 2-formamido-N(1)-(5-O-phospho-beta-D-ribosyl)acetamidine + ATP = 5-amino-1-(5-phospho-beta-D-ribosyl)imidazole + ADP + phosphate + H(+). It functions in the pathway purine metabolism; IMP biosynthesis via de novo pathway; 5-amino-1-(5-phospho-D-ribosyl)imidazole from N(2)-formyl-N(1)-(5-phospho-D-ribosyl)glycinamide: step 2/2. The sequence is that of Phosphoribosylformylglycinamidine cyclo-ligase from Myxococcus xanthus (strain DK1622).